A 290-amino-acid polypeptide reads, in one-letter code: TIP41-like protein (290 aa).

This sequence belongs to the TIP41 family. Interacts with TAP46. In terms of tissue distribution, widely expressed.

Its function is as follows. May be involved in the regulation of the TOR signaling pathway. Indirectly activates the PP2A phosphatase via interaction with its suppressor TAP46. Could play a role in cytoskeleton functions. This Arabidopsis thaliana (Mouse-ear cress) protein is TIP41-like protein.